The primary structure comprises 324 residues: Viral cathepsin (324 aa).

An N-terminal signal peptide occupies residues 1-16 (MNKIVLYLLVYGATLG). Residues 17–113 (AAYDLLKAPS…VVLDRPPDKG (97 aa)) constitute a propeptide, activation peptide. 3 cysteine pairs are disulfide-bonded: cysteine 134–cysteine 175, cysteine 168–cysteine 208, and cysteine 263–cysteine 311. Residue cysteine 137 is part of the active site. The N-linked (GlcNAc...) asparagine; by host glycan is linked to asparagine 159. Catalysis depends on residues histidine 270 and asparagine 290.

Belongs to the peptidase C1 family. Post-translationally, synthesized as an inactive proenzyme and activated by proteolytic removal of the inhibitory propeptide.

It catalyses the reaction Endopeptidase of broad specificity, hydrolyzing substrates of both cathepsin L and cathepsin B.. Cysteine protease that plays an essential role in host liquefaction to facilitate horizontal transmission of the virus. May participate in the degradation of foreign protein expressed by the baculovirus system. The protein is Viral cathepsin (VCATH) of Antheraea pernyi nuclear polyhedrosis virus (ApNPV).